A 221-amino-acid chain; its full sequence is Interleukin-12 subunit alpha (221 aa).

Positions 1 to 25 (MCPLRSLLLISTLVLLHHLPHLSLG) are cleaved as a signal peptide. 3 disulfide bridges follow: C39–C112, C66–C198, and C87–C125. N-linked (GlcNAc...) asparagine glycosylation is present at N95.

It belongs to the IL-6 superfamily. As to quaternary structure, heterodimer with IL12B; disulfide-linked. This heterodimer is known as interleukin IL-12. Heterodimer with EBI3/IL27B; not disulfide-linked. This heterodimer is known as interleukin IL-35. Interacts with NBR1; this interaction promotes IL-12 secretion.

Its subcellular location is the secreted. Heterodimerizes with IL12B to form the IL-12 cytokine or with EBI3/IL27B to form the IL-35 cytokine. IL-12 is primarily produced by professional antigen-presenting cells (APCs) such as B-cells and dendritic cells (DCs) as well as macrophages and granulocytes and regulates T-cell and natural killer-cell responses, induces the production of interferon-gamma (IFN-gamma), favors the differentiation of T-helper 1 (Th1) cells and is an important link between innate resistance and adaptive immunity. Mechanistically, exerts its biological effects through a receptor composed of IL12R1 and IL12R2 subunits. Binding to the receptor results in the rapid tyrosine phosphorylation of a number of cellular substrates including the JAK family kinases TYK2 and JAK2. In turn, recruited STAT4 gets phosphorylated and translocates to the nucleus where it regulates cytokine/growth factor responsive genes. As part of IL-35, plays essential roles in maintaining the immune homeostasis of the liver microenvironment and also functions as an immune-suppressive cytokine. Mediates biological events through unconventional receptors composed of IL12RB2 and gp130/IL6ST heterodimers or homodimers. Signaling requires the transcription factors STAT1 and STAT4, which form a unique heterodimer that binds to distinct DNA sites. The protein is Interleukin-12 subunit alpha (IL12A) of Bos taurus (Bovine).